The chain runs to 328 residues: Malate dehydrogenase (328 aa).

An NAD(+)-binding site is contributed by glycine 16–serine 22. Arginine 97 and arginine 103 together coordinate substrate. NAD(+)-binding positions include asparagine 110, glutamine 117, and valine 134 to asparagine 136. Positions 136 and 167 each coordinate substrate. The active-site Proton acceptor is histidine 192.

Belongs to the LDH/MDH superfamily. MDH type 2 family.

It carries out the reaction (S)-malate + NAD(+) = oxaloacetate + NADH + H(+). Catalyzes the reversible oxidation of malate to oxaloacetate. The chain is Malate dehydrogenase from Corynebacterium glutamicum (strain R).